Reading from the N-terminus, the 557-residue chain is Formate--tetrahydrofolate ligase (557 aa).

65 to 72 (TPAGEGKT) lines the ATP pocket.

This sequence belongs to the formate--tetrahydrofolate ligase family.

The enzyme catalyses (6S)-5,6,7,8-tetrahydrofolate + formate + ATP = (6R)-10-formyltetrahydrofolate + ADP + phosphate. It functions in the pathway one-carbon metabolism; tetrahydrofolate interconversion. This Methylococcus capsulatus (strain ATCC 33009 / NCIMB 11132 / Bath) protein is Formate--tetrahydrofolate ligase.